A 212-amino-acid polypeptide reads, in one-letter code: Putative DNA-binding protein At1g48610 (212 aa).

The tract at residues Met-1–Ala-130 is disordered. The segment covering Asn-27 to Gln-44 has biased composition (polar residues). 3 consecutive DNA-binding regions (a.T hook) follow at residues Lys-45 to Ser-56, Thr-70 to Asn-79, and Lys-94 to Arg-98. Residues Asp-57–Pro-72 show a composition bias toward polar residues. The span at Thr-103–Thr-113 shows a compositional bias: low complexity. Positions Arg-118–Asp-127 form a DNA-binding region, a.T hook 4. Residues Asp-176–Asp-210 are a coiled coil.

It is found in the nucleus. In terms of biological role, may bind DNA. In Arabidopsis thaliana (Mouse-ear cress), this protein is Putative DNA-binding protein At1g48610.